The chain runs to 305 residues: Tyrosine recombinase XerC (305 aa).

The 92-residue stretch at threonine 4–glutamate 95 folds into the Core-binding (CB) domain. In terms of domain architecture, Tyr recombinase spans leucine 116 to threonine 298. Active-site residues include arginine 159, lysine 182, histidine 250, arginine 253, and histidine 276. Catalysis depends on tyrosine 285, which acts as the O-(3'-phospho-DNA)-tyrosine intermediate.

Belongs to the 'phage' integrase family. XerC subfamily. As to quaternary structure, forms a cyclic heterotetrameric complex composed of two molecules of XerC and two molecules of XerD.

The protein localises to the cytoplasm. Site-specific tyrosine recombinase, which acts by catalyzing the cutting and rejoining of the recombining DNA molecules. The XerC-XerD complex is essential to convert dimers of the bacterial chromosome into monomers to permit their segregation at cell division. It also contributes to the segregational stability of plasmids. The sequence is that of Tyrosine recombinase XerC from Rickettsia africae (strain ESF-5).